A 234-amino-acid chain; its full sequence is Phycobilisome rod-core linker polypeptide cpcG (234 aa).

One can recognise a PBS-linker domain in the interval 11–191 (SSQNHRVNSF…PRYGSDFKER (181 aa)).

The protein belongs to the phycobilisome linker protein family. In terms of assembly, the phycobilisome is a hemidiscoidal structure that is composed of two distinct substructures: a core complex and a number of rods radiating from the core.

It localises to the plastid. It is found in the chloroplast thylakoid membrane. Functionally, rod-core linker protein required for attachment of phycocyanin to allophycocyanin in cores of phycobilisomes. In terms of biological role, linker polypeptides determine the state of aggregation and the location of the disk-shaped phycobiliprotein units within the phycobilisome and modulate their spectroscopic properties in order to mediate a directed and optimal energy transfer. This chain is Phycobilisome rod-core linker polypeptide cpcG (cpcG), found in Cyanidium caldarium (Red alga).